The following is a 251-amino-acid chain: Triosephosphate isomerase (251 aa).

Position 12-14 (12-14) interacts with substrate; that stretch reads NWK. The active-site Electrophile is His99. Residue Glu169 is the Proton acceptor of the active site. Residues Gly175, Ser214, and 235–236 contribute to the substrate site; that span reads GG.

It belongs to the triosephosphate isomerase family. As to quaternary structure, homodimer.

It is found in the cytoplasm. The catalysed reaction is D-glyceraldehyde 3-phosphate = dihydroxyacetone phosphate. Its pathway is carbohydrate biosynthesis; gluconeogenesis. It functions in the pathway carbohydrate degradation; glycolysis; D-glyceraldehyde 3-phosphate from glycerone phosphate: step 1/1. Involved in the gluconeogenesis. Catalyzes stereospecifically the conversion of dihydroxyacetone phosphate (DHAP) to D-glyceraldehyde-3-phosphate (G3P). The protein is Triosephosphate isomerase of Bradyrhizobium sp. (strain BTAi1 / ATCC BAA-1182).